Consider the following 102-residue polypeptide: MVRYCVRSLSERSHEVYGQQLHGQEQGHHDQEEQGLSPEQVEVYERTQGHSHYRRRHCSRRRLHRIHRQQHRSCKRRRRHSCRHRRKHRRGCRTRRRTCRRH.

Residues S8, S10, and S37 each carry the phosphoserine modification. Disordered stretches follow at residues E15 to V41 and I66 to H102.

It belongs to the protamine P2 family. As to quaternary structure, interacts with TDRP. In terms of processing, proteolytic processing into mature chains is required for histone eviction during spermatogenesis. Transition proteins (TNP1 and TNP2) are required for processing. In terms of tissue distribution, testis.

It localises to the nucleus. The protein resides in the chromosome. Functionally, protamines substitute for histones in the chromatin of sperm during the haploid phase of spermatogenesis. They compact sperm DNA into a highly condensed, stable and inactive complex. The sequence is that of Protamine-2 (PRM2) from Pongo pygmaeus (Bornean orangutan).